Consider the following 347-residue polypeptide: Histone deacetylase 11 (347 aa).

The histone deacetylase stretch occupies residues 14–318; sequence TRWPIVYSPR…ARIIADSILN (305 aa). Histidine 143 is an active-site residue.

The protein belongs to the histone deacetylase family. As to quaternary structure, interacts with HDAC6.

It is found in the nucleus. It carries out the reaction N(6)-acetyl-L-lysyl-[histone] + H2O = L-lysyl-[histone] + acetate. Functionally, responsible for the deacetylation of lysine residues on the N-terminal part of the core histones (H2A, H2B, H3 and H4). Histone deacetylation gives a tag for epigenetic repression and plays an important role in transcriptional regulation, cell cycle progression and developmental events. Histone deacetylases act via the formation of large multiprotein complexes. The chain is Histone deacetylase 11 (HDAC11) from Macaca fascicularis (Crab-eating macaque).